The sequence spans 118 residues: Large ribosomal subunit protein uL18 (118 aa).

The protein belongs to the universal ribosomal protein uL18 family. Part of the 50S ribosomal subunit; part of the 5S rRNA/L5/L18/L25 subcomplex. Contacts the 5S and 23S rRNAs.

This is one of the proteins that bind and probably mediate the attachment of the 5S RNA into the large ribosomal subunit, where it forms part of the central protuberance. This chain is Large ribosomal subunit protein uL18, found in Mycoplasmopsis pulmonis (strain UAB CTIP) (Mycoplasma pulmonis).